Here is a 685-residue protein sequence, read N- to C-terminus: Sodium-dependent phosphate transporter 1 (685 aa).

Helical transmembrane passes span 25–45 (FLWM…SVGA), 66–86 (ACIL…AKVS), 106–126 (LMAG…AASF), 162–182 (IVLS…LLFY), 201–221 (ALPI…MYSG), and 234–254 (GIIL…WFFV). Positions 482–492 (VEAEEQEEGSI) are enriched in acidic residues. A disordered region spans residues 482-513 (VEAEEQEEGSIEDVATDRKSSSSSLEERHDQD). The segment covering 496 to 513 (ATDRKSSSSSLEERHDQD) has biased composition (basic and acidic residues). Helical transmembrane passes span 517 to 537 (VSLL…FAHG), 565 to 585 (ATPI…LWVW), 606 to 626 (FSIE…GLPI), and 656 to 676 (IFLA…AIMA).

The protein belongs to the inorganic phosphate transporter (PiT) (TC 2.A.20) family.

It localises to the cell membrane. The catalysed reaction is 2 Na(+)(out) + phosphate(out) = 2 Na(+)(in) + phosphate(in). In terms of biological role, sodium-phosphate symporter which preferentially transports the monovalent form of phosphate with a stoichiometry of two sodium ions per phosphate ion. This is Sodium-dependent phosphate transporter 1 (slc20a1) from Xenopus tropicalis (Western clawed frog).